Here is a 434-residue protein sequence, read N- to C-terminus: MSIITDVYAREVLDSRGNPTLEVEVYTESGAFGRGMVPSGASTGEHEAVELRDGDKSRYGGLGTQKAVDNVNNIIAEAIIGYDVRDQQAIDRAMIALDGTPNKGKLGANAILGVSIAVARAAADYLEIPLYSYLGGFNTKVLPTPMMNIINGGSHSDAPIAFQEFMILPVGAPTFKEALRYGAEIFHALKKILKSRGLETAVGDEGGFAPRFEGTEDGVETILAAIEAAGYVPGKDVFIGFDCASSEFYDKERKVYDYTKFEGEGAAVRTSAEQIDYLEELVNKYPIITIEDGMDENDWDGWKALTERLGKKVQLVGDDFFVTNTDYLARGIQEGAANSILIKVNQIGTLTETFEAIEMAKEAGYTAVVSHRSGETEDSTIADIAVATNAGQIKTGSLSRTDRIAKYNQLLRIEDQLGEVAEYRGLKSFYNLKK.

Residue Gln-163 participates in (2R)-2-phosphoglycerate binding. Residue Glu-205 is the Proton donor of the active site. Positions 242, 291, and 318 each coordinate Mg(2+). (2R)-2-phosphoglycerate contacts are provided by Lys-343, Arg-372, Ser-373, and Lys-394. Lys-343 acts as the Proton acceptor in catalysis.

The protein belongs to the enolase family. Mg(2+) is required as a cofactor.

The protein localises to the cytoplasm. It is found in the secreted. It localises to the cell surface. It catalyses the reaction (2R)-2-phosphoglycerate = phosphoenolpyruvate + H2O. It functions in the pathway carbohydrate degradation; glycolysis; pyruvate from D-glyceraldehyde 3-phosphate: step 4/5. Catalyzes the reversible conversion of 2-phosphoglycerate (2-PG) into phosphoenolpyruvate (PEP). It is essential for the degradation of carbohydrates via glycolysis. The chain is Enolase from Streptococcus pneumoniae serotype 19F (strain G54).